The following is a 199-amino-acid chain: Nucleoside triphosphate pyrophosphatase (199 aa).

The active-site Proton acceptor is the Asp76.

It belongs to the Maf family. It depends on a divalent metal cation as a cofactor.

The protein localises to the cytoplasm. It carries out the reaction a ribonucleoside 5'-triphosphate + H2O = a ribonucleoside 5'-phosphate + diphosphate + H(+). The enzyme catalyses a 2'-deoxyribonucleoside 5'-triphosphate + H2O = a 2'-deoxyribonucleoside 5'-phosphate + diphosphate + H(+). Its function is as follows. Nucleoside triphosphate pyrophosphatase. May have a dual role in cell division arrest and in preventing the incorporation of modified nucleotides into cellular nucleic acids. The polypeptide is Nucleoside triphosphate pyrophosphatase (Ruegeria sp. (strain TM1040) (Silicibacter sp.)).